A 379-amino-acid chain; its full sequence is Subtilisin Carlsberg (379 aa).

The N-terminal stretch at 1 to 29 (MMRKKSFWLGMLTAFMLVFTMAFSDSASA) is a signal peptide. The propeptide occupies 30 to 105 (AQPAKNVEKD…VEEDHVAHAL (76 aa)). One can recognise an Inhibitor I9 domain in the interval 44-102 (FKSGVKTASVKKDIIKESGGKVDKQFRIINAAKAKLDKEALKEVKNDPDVAYVEEDHVA). A Ca(2+)-binding site is contributed by Q107. One can recognise a Peptidase S8 domain in the interval 110–378 (PYGIPLIKAD…KGLINVEAAA (269 aa)). D137 (charge relay system) is an active-site residue. D146 is a binding site for Ca(2+). H168 functions as the Charge relay system in the catalytic mechanism. Residues L179, N181, T183, V185, A273, Y275, and V278 each contribute to the Ca(2+) site. Residue S325 is the Charge relay system of the active site.

This sequence belongs to the peptidase S8 family. Requires Ca(2+) as cofactor.

The protein localises to the secreted. It carries out the reaction Hydrolysis of proteins with broad specificity for peptide bonds, and a preference for a large uncharged residue in P1. Hydrolyzes peptide amides.. Its activity is regulated as follows. Inhibited by p-chlorophenyl and 1-naphthyl boronic acid derivatives. In terms of biological role, subtilisin is an extracellular alkaline serine protease, it catalyzes the hydrolysis of proteins and peptide amides. Shows high specificity for aromatic and hydrophobic amino acids in the P1 substrate position. May play an important role in the degradation of feather keratin. The protein is Subtilisin Carlsberg of Bacillus licheniformis.